The following is a 201-amino-acid chain: CMRF35-like molecule 7 (201 aa).

An N-terminal signal peptide occupies residues 1-17 (MWLPPALLLLSLSGCFS). Positions 18-120 (IQGPESVRAP…PDLGTQVKVI (103 aa)) constitute an Ig-like V-type domain. At 18 to 151 (IQGPESVRAP…FIGSHKRNHY (134 aa)) the chain is on the extracellular side. A disulfide bridge connects residues Cys-36 and Cys-104. Residues 152–172 (MLLVFVKVPILLILVTAILWL) traverse the membrane as a helical segment. The Cytoplasmic portion of the chain corresponds to 173-201 (KGSQRVPEEPGEQPIYMNFSEPLTKDMAT). Phosphotyrosine; by FYN is present on Tyr-188.

The protein belongs to the CD300 family. Interacts with TYROBP, which enhances cell surface expression and activation properties. Interacts with GRB2 in the presence of FYN. In terms of processing, phosphorylation on Tyr-188 by FYN is required for interaction with GRB2. Expressed exclusively in myeloid lineages.

It is found in the cell membrane. Functionally, acts as an activating immune receptor through its interaction with ITAM-bearing adapter TYROBP, and also independently by recruitment of GRB2. This is CMRF35-like molecule 7 (CD300LB) from Homo sapiens (Human).